Here is a 418-residue protein sequence, read N- to C-terminus: Serine--tRNA ligase (418 aa).

228-230 (TSE) serves as a coordination point for L-serine. Residues 258 to 260 (RKE) and V274 each bind ATP. Position 281 (E281) interacts with L-serine. 345-348 (EVVS) is an ATP binding site. T381 contacts L-serine.

It belongs to the class-II aminoacyl-tRNA synthetase family. Type-1 seryl-tRNA synthetase subfamily. In terms of assembly, homodimer. The tRNA molecule binds across the dimer.

The protein resides in the cytoplasm. It carries out the reaction tRNA(Ser) + L-serine + ATP = L-seryl-tRNA(Ser) + AMP + diphosphate + H(+). The catalysed reaction is tRNA(Sec) + L-serine + ATP = L-seryl-tRNA(Sec) + AMP + diphosphate + H(+). It participates in aminoacyl-tRNA biosynthesis; selenocysteinyl-tRNA(Sec) biosynthesis; L-seryl-tRNA(Sec) from L-serine and tRNA(Sec): step 1/1. Catalyzes the attachment of serine to tRNA(Ser). Is also able to aminoacylate tRNA(Sec) with serine, to form the misacylated tRNA L-seryl-tRNA(Sec), which will be further converted into selenocysteinyl-tRNA(Sec). In Cenarchaeum symbiosum (strain A), this protein is Serine--tRNA ligase.